The sequence spans 429 residues: Cell wall protein ECM33 (429 aa).

The N-terminal stretch at M1 to A19 is a signal peptide. N-linked (GlcNAc...) asparagine glycosylation is found at N21, N56, N82, N196, N209, N227, N234, N241, N267, N279, N304, and N328. S339 carries the post-translational modification Phosphoserine. Residues L361–S401 are compositionally biased toward low complexity. Residues L361 to E410 form a disordered region. The GPI-anchor amidated glycine moiety is linked to residue G406. The propeptide at A407–L429 is removed in mature form.

Belongs to the SPS2 family. The GPI-anchor is attached to the protein in the endoplasmic reticulum and serves to target the protein to the cell surface. There, the glucosamine-inositol phospholipid moiety is cleaved off and the GPI-modified mannoprotein is covalently attached via its lipidless GPI glycan remnant to the 1,6-beta-glucan of the outer cell wall layer.

It is found in the cell membrane. The protein localises to the secreted. Its subcellular location is the cell wall. Required for proper cell wall integrity and for the correct assembly of the mannoprotein outer layer of the cell wall. Important for apical bud growth. This is Cell wall protein ECM33 (ECM33) from Saccharomyces cerevisiae (strain YJM789) (Baker's yeast).